A 309-amino-acid chain; its full sequence is Probable lipid kinase YegS-like (309 aa).

The DAGKc domain occupies 1-134 (MAPSHWRVIL…VDLLRIDADH (134 aa)). Residues Thr39, 65 to 71 (GDGTLSE), and Thr96 each bind ATP. Mg(2+) is bound by residues Leu219, Asp222, and Leu224. The Proton acceptor role is filled by Glu280.

This sequence belongs to the diacylglycerol/lipid kinase family. YegS lipid kinase subfamily. It depends on Mg(2+) as a cofactor. Ca(2+) is required as a cofactor.

The protein resides in the cytoplasm. Functionally, probably phosphorylates lipids; the in vivo substrate is unknown. This Xanthomonas euvesicatoria pv. vesicatoria (strain 85-10) (Xanthomonas campestris pv. vesicatoria) protein is Probable lipid kinase YegS-like.